A 343-amino-acid polypeptide reads, in one-letter code: MSSKKGNMNKKPLKKSYSLNGLSGTLDGTLETKVKDLIEEPLDAQNTLSDDYTNKSRRKYLKNIRQFKKSQNKTDTEKSGETNDSDYSDYSDNSDDVDDLDDVDDLNDPGNSKFSDCSDCLEDMDNYDNSDDELDLNETTNKSTNKILDKLNIKTTSFTKLNKSTKFNNPKITKTIPNKSNGKTTKKSTKNSNEIFKELIKKQLPDVPAQWKLNINDMKRICKYIDTSIFDKDHCCIWNGYITNINNSNKGTYVNFYFRNKKVALHRLLYSNFVAPLNSSEYLKFNCDNKGICCNINHYEKYKYSKNNVVVKKEPKNKEHKKEVKEVIIIGSDDPDKLIINFD.

3 disordered regions span residues 1-25 (MSSK…LSGT), 62-119 (KNIR…DCSD), and 169-188 (NPKI…TKKS). Positions 62–71 (KNIRQFKKSQ) are enriched in basic residues. The span at 72–81 (NKTDTEKSGE) shows a compositional bias: basic and acidic residues. Over residues 83–107 (NDSDYSDYSDNSDDVDDLDDVDDLN) the composition is skewed to acidic residues.

This is an uncharacterized protein from Acanthamoeba polyphaga (Amoeba).